The following is a 185-amino-acid chain: Elongation factor P (185 aa).

This sequence belongs to the elongation factor P family.

Its subcellular location is the cytoplasm. It participates in protein biosynthesis; polypeptide chain elongation. Involved in peptide bond synthesis. Stimulates efficient translation and peptide-bond synthesis on native or reconstituted 70S ribosomes in vitro. Probably functions indirectly by altering the affinity of the ribosome for aminoacyl-tRNA, thus increasing their reactivity as acceptors for peptidyl transferase. The protein is Elongation factor P of Caldicellulosiruptor bescii (strain ATCC BAA-1888 / DSM 6725 / KCTC 15123 / Z-1320) (Anaerocellum thermophilum).